The primary structure comprises 357 residues: UPF0283 membrane protein BMEA_A1074 (357 aa).

The disordered stretch occupies residues 1-36 (MSDKTPRKPTAFRLEQPARVSAASEQEEPRRPRAVK). Positions 27–36 (EEPRRPRAVK) are enriched in basic and acidic residues. The next 2 helical transmembrane spans lie at 78–98 (ILFG…TEDL) and 109–129 (LGWT…AIIL).

Belongs to the UPF0283 family.

The protein localises to the cell inner membrane. This Brucella melitensis biotype 2 (strain ATCC 23457) protein is UPF0283 membrane protein BMEA_A1074.